Consider the following 129-residue polypeptide: MTNFKDIIKKIEYKFSKHQLPDIKVGDLIRLGISIQESGKQRVQPFEGTVIALHKAGLNTTITVRKILQGIGVERVFPIHASCLTSIQVLRRSQVSRAKLYYLRNRTGKATRLKEKFEKLPPIWVNKLP.

It belongs to the bacterial ribosomal protein bL19 family.

The protein localises to the plastid. This Prototheca wickerhamii protein is Large ribosomal subunit protein bL19c.